The primary structure comprises 303 residues: Ribosomal protein uL3 glutamine methyltransferase (303 aa).

It belongs to the protein N5-glutamine methyltransferase family. PrmB subfamily.

It carries out the reaction L-glutaminyl-[ribosomal protein uL3] + S-adenosyl-L-methionine = N(5)-methyl-L-glutaminyl-[ribosomal protein uL3] + S-adenosyl-L-homocysteine + H(+). Functionally, methylates large ribosomal subunit protein uL3 on a specific glutamine residue. The protein is Ribosomal protein uL3 glutamine methyltransferase of Neisseria meningitidis serogroup A / serotype 4A (strain DSM 15465 / Z2491).